Consider the following 555-residue polypeptide: Bifunctional epoxide hydrolase 2 (555 aa).

Residues 1–224 (MALRAAVFDL…KVTGVQLLQT (224 aa)) form a phosphatase region. Mg(2+) contacts are provided by Asp-9 and Asp-11. Lys-43 is subject to N6-acetyllysine. Residue 123–124 (TN) participates in phosphate binding. Asp-185 is a binding site for Mg(2+). Lys-191 and Lys-215 each carry N6-acetyllysine. The interval 235–555 (SALSHGYVLI…ARNPLVDSKL (321 aa)) is epoxide hydrolase. The 273-residue stretch at 259 to 531 (PAVCLCHGFP…CGHWTQIDKP (273 aa)) folds into the AB hydrolase-1 domain. The Nucleophile role is filled by Asp-335. At Ser-370 the chain carries Phosphoserine. Tyr-383 lines the substrate pocket. Lys-455 is modified (N6-succinyllysine). Tyr-466 (proton donor) is an active-site residue. An N6-succinyllysine modification is found at Lys-505. Cys-522 is lipidated: S-(15-deoxy-Delta12,14-prostaglandin J2-9-yl)cysteine. The active-site Proton acceptor is the His-524. A Microbody targeting signal motif is present at residues 553–555 (SKL). Residue Lys-554 is modified to N6-succinyllysine.

Belongs to the AB hydrolase superfamily. Epoxide hydrolase family. Homodimer. Requires Mg(2+) as cofactor. Post-translationally, the covalent modification of cysteine by 15-deoxy-Delta12,14-prostaglandin-J2 is autocatalytic and reversible. It may occur as an alternative to other cysteine modifications, such as S-nitrosylation and S-palmitoylation.

The protein localises to the cytoplasm. Its subcellular location is the peroxisome. It catalyses the reaction an epoxide + H2O = an ethanediol. The enzyme catalyses (9S,10S)-10-hydroxy-9-(phosphooxy)octadecanoate + H2O = (9S,10S)-9,10-dihydroxyoctadecanoate + phosphate. The catalysed reaction is (14R,15S)-epoxy-(5Z,8Z,11Z)-eicosatrienoate + H2O = (14R,15R)-dihydroxy-(5Z,8Z,11Z)-eicosatrienoate. With respect to regulation, inhibited by 1-(1-acetylpiperidin-4-yl)-3-(4-(trifl uoromethoxy)phenyl)urea (TPAU), 1-cyclohexyl-3-dodecylurea (CDU), 12-(3-adamantan-1-yl-ureido)-dodecanoic acid (AUDA), 1-((3S, 5S, 7S)-adamantan-1-yl)-3-(5-(2-(2-ethoxyethoxy) ethoxy)pentyl)urea (AEPU), N-adamantyl-N[']-cyclohexyl urea (ACU), 4-(((1S, 4S)-4-(3-((3S, 5S, 7S)-adamantan-1-yl) ureido)cyclohexyl)oxy)benzoic acid (c-AUCB), 4-(((1R, 4R)-4-(3-((3S, 5S, 7S)-adamantan-1-yl)ureido)cyclohexyl)oxy)benzoic acid (t-AUCB), 4-(((1R, 4R)-4-(3-(4(trifluoromethoxy)phenyl)ureido)cyclohexyl)oxy)benzoic acid (t-TAUCB) and to a lesser extent by 8-(3-((3S, 5S, 7S)-adamantan-1-yl)ureido) octanoic acid (AUOA). Its function is as follows. Bifunctional enzyme. The C-terminal domain has epoxide hydrolase activity and acts on epoxides (alkene oxides, oxiranes) and arene oxides. Plays a role in xenobiotic metabolism by degrading potentially toxic epoxides. Also determines steady-state levels of physiological mediators. The N-terminal domain has lipid phosphatase activity, with the highest activity towards threo-9,10-phosphonooxy-hydroxy-octadecanoic acid, followed by erythro-9,10-phosphonooxy-hydroxy-octadecanoic acid, 12-phosphonooxy-octadec-9Z-enoic acid and 12-phosphonooxy-octadec-9E-enoic acid. The protein is Bifunctional epoxide hydrolase 2 (EPHX2) of Sus scrofa (Pig).